The primary structure comprises 319 residues: Nucleotide-binding protein Rru_A3448 (319 aa).

The disordered stretch occupies residues 1-34 (MGRSASLLRLRDPAPLPTDIAPDPAEAPPSPAAD). Position 42–49 (42–49 (GMSGAGRT)) interacts with ATP. 90 to 93 (DTRT) is a GTP binding site.

The protein belongs to the RapZ-like family.

Displays ATPase and GTPase activities. In Rhodospirillum rubrum (strain ATCC 11170 / ATH 1.1.1 / DSM 467 / LMG 4362 / NCIMB 8255 / S1), this protein is Nucleotide-binding protein Rru_A3448.